Reading from the N-terminus, the 131-residue chain is Small ribosomal subunit protein uS11 (131 aa).

The protein belongs to the universal ribosomal protein uS11 family. In terms of assembly, part of the 30S ribosomal subunit. Interacts with proteins S7 and S18. Binds to IF-3.

In terms of biological role, located on the platform of the 30S subunit, it bridges several disparate RNA helices of the 16S rRNA. Forms part of the Shine-Dalgarno cleft in the 70S ribosome. The sequence is that of Small ribosomal subunit protein uS11 from Exiguobacterium sibiricum (strain DSM 17290 / CCUG 55495 / CIP 109462 / JCM 13490 / 255-15).